The primary structure comprises 104 residues: Small ribosomal subunit protein uS10 (104 aa).

Belongs to the universal ribosomal protein uS10 family. As to quaternary structure, part of the 30S ribosomal subunit.

Its function is as follows. Involved in the binding of tRNA to the ribosomes. This chain is Small ribosomal subunit protein uS10, found in Maricaulis maris (strain MCS10) (Caulobacter maris).